We begin with the raw amino-acid sequence, 485 residues long: Adenosylhomocysteinase 1 (485 aa).

Positions 64, 139, and 205 each coordinate substrate. T206–T208 contacts NAD(+). Substrate contacts are provided by K235 and D239. Residues G271 to G276, E292, I348 to H350, N397, H404, K479, K479 to Y483, and Y483 contribute to the NAD(+) site.

The protein belongs to the adenosylhomocysteinase family. As to quaternary structure, homotetramer. The cofactor is NAD(+).

It catalyses the reaction S-adenosyl-L-homocysteine + H2O = L-homocysteine + adenosine. It participates in amino-acid biosynthesis; L-homocysteine biosynthesis; L-homocysteine from S-adenosyl-L-homocysteine: step 1/1. Its function is as follows. Essential protein during embryogenesis. Adenosylhomocysteine is a competitive inhibitor of S-adenosyl-L-methionine-dependent methyl transferase reactions; therefore adenosylhomocysteinase may play a key role in the control of methylations via regulation of the intracellular concentration of adenosylhomocysteine. Required for DNA methylation-dependent gene silencing. In Arabidopsis thaliana (Mouse-ear cress), this protein is Adenosylhomocysteinase 1.